The sequence spans 202 residues: Helix-loop-helix protein 10 (202 aa).

Disordered regions lie at residues 1-26 and 83-112; these read MESS…NSEL and QNKS…GKID. Residues 17–26 show a composition bias toward polar residues; the sequence is STGNHGNSEL. The segment at 121–134 is basic motif; it reads TRRYEANARERNRV. The 52-residue stretch at 121–172 folds into the bHLH domain; it reads TRRYEANARERNRVQQLSKMFDQLRVCLPIEDDAKISKLATLKVASSYIGYL. Residues 135–172 are helix-loop-helix motif; that stretch reads QQLSKMFDQLRVCLPIEDDAKISKLATLKVASSYIGYL.

In terms of assembly, heterodimer with hlh-2. As to expression, expressed in intestine, neurons in head, body and tail, and in body hypodermis, and vulva. Expressed in neurons in the male-specific genital sensilla (simple sense organs) known as rays.

The protein localises to the nucleus. Its subcellular location is the cytoplasm. Functionally, probable transcription factor which binds the E box motif 5'-CA[TC][AG]TG-3'. This Caenorhabditis elegans protein is Helix-loop-helix protein 10.